Here is a 147-residue protein sequence, read N- to C-terminus: MEVILLDKVNKLGGIGDVAVVKPGYARNFLIPNKKAVMATKANLASFEERRVELEAQAAERKAAAEARALTLEGKTFTIAANAGDEGKLFGSIGTRDIADAISTQVAVEKAEIRLPEGAIRHTGSFEVDVQLHSEVIVTVTLEVIAE.

This sequence belongs to the bacterial ribosomal protein bL9 family.

Binds to the 23S rRNA. In Marinomonas sp. (strain MWYL1), this protein is Large ribosomal subunit protein bL9.